The primary structure comprises 342 residues: Phosphoribosylformylglycinamidine cyclo-ligase (342 aa).

The protein belongs to the AIR synthase family.

It is found in the cytoplasm. The catalysed reaction is 2-formamido-N(1)-(5-O-phospho-beta-D-ribosyl)acetamidine + ATP = 5-amino-1-(5-phospho-beta-D-ribosyl)imidazole + ADP + phosphate + H(+). It participates in purine metabolism; IMP biosynthesis via de novo pathway; 5-amino-1-(5-phospho-D-ribosyl)imidazole from N(2)-formyl-N(1)-(5-phospho-D-ribosyl)glycinamide: step 2/2. This Staphylococcus aureus (strain MSSA476) protein is Phosphoribosylformylglycinamidine cyclo-ligase.